The primary structure comprises 318 residues: L-lactate dehydrogenase (318 aa).

Residues Val16, Asp37, and Tyr69 each contribute to the NAD(+) site. Substrate is bound by residues Gln86, Arg92, and 124–127; that span reads NPVD. Residues 122 to 124 and Ser147 each bind NAD(+); that span reads ASN. Residue 152–155 coordinates substrate; it reads DSAR. The active-site Proton acceptor is the His179. Tyr223 is subject to Phosphotyrosine. Thr232 is a substrate binding site.

This sequence belongs to the LDH/MDH superfamily. LDH family. Homotetramer.

It localises to the cytoplasm. The catalysed reaction is (S)-lactate + NAD(+) = pyruvate + NADH + H(+). It functions in the pathway fermentation; pyruvate fermentation to lactate; (S)-lactate from pyruvate: step 1/1. Catalyzes the conversion of lactate to pyruvate. The protein is L-lactate dehydrogenase of Mycoplasma mycoides subsp. mycoides SC (strain CCUG 32753 / NCTC 10114 / PG1).